Consider the following 156-residue polypeptide: 6,7-dimethyl-8-ribityllumazine synthase (156 aa).

5-amino-6-(D-ribitylamino)uracil-binding positions include Phe-23, 57-59, and 81-83; these read AFE and TVI. Residue 86–87 coordinates (2S)-2-hydroxy-3-oxobutyl phosphate; sequence ST. His-89 serves as the catalytic Proton donor. Phe-114 contacts 5-amino-6-(D-ribitylamino)uracil. A (2S)-2-hydroxy-3-oxobutyl phosphate-binding site is contributed by Arg-128.

Belongs to the DMRL synthase family. In terms of assembly, forms an icosahedral capsid composed of 60 subunits, arranged as a dodecamer of pentamers.

The enzyme catalyses (2S)-2-hydroxy-3-oxobutyl phosphate + 5-amino-6-(D-ribitylamino)uracil = 6,7-dimethyl-8-(1-D-ribityl)lumazine + phosphate + 2 H2O + H(+). Its pathway is cofactor biosynthesis; riboflavin biosynthesis; riboflavin from 2-hydroxy-3-oxobutyl phosphate and 5-amino-6-(D-ribitylamino)uracil: step 1/2. Its function is as follows. Catalyzes the formation of 6,7-dimethyl-8-ribityllumazine by condensation of 5-amino-6-(D-ribitylamino)uracil with 3,4-dihydroxy-2-butanone 4-phosphate. This is the penultimate step in the biosynthesis of riboflavin. The polypeptide is 6,7-dimethyl-8-ribityllumazine synthase (Halalkalibacterium halodurans (strain ATCC BAA-125 / DSM 18197 / FERM 7344 / JCM 9153 / C-125) (Bacillus halodurans)).